Consider the following 553-residue polypeptide: Formate--tetrahydrofolate ligase (553 aa).

Residue 56 to 63 (TPKGEGKT) participates in ATP binding.

Belongs to the formate--tetrahydrofolate ligase family.

It catalyses the reaction (6S)-5,6,7,8-tetrahydrofolate + formate + ATP = (6R)-10-formyltetrahydrofolate + ADP + phosphate. It participates in one-carbon metabolism; tetrahydrofolate interconversion. This chain is Formate--tetrahydrofolate ligase, found in Haloarcula marismortui (strain ATCC 43049 / DSM 3752 / JCM 8966 / VKM B-1809) (Halobacterium marismortui).